The sequence spans 458 residues: Bifunctional protein GlmU (458 aa).

A pyrophosphorylase region spans residues 1 to 230 (MSLPTYSKLN…EWQVAGINSK (230 aa)). UDP-N-acetyl-alpha-D-glucosamine is bound by residues 14-17 (LAAG), lysine 28, glutamine 79, and 84-85 (GT). Aspartate 108 provides a ligand contact to Mg(2+). Residues glycine 141, glutamate 155, asparagine 170, and asparagine 228 each coordinate UDP-N-acetyl-alpha-D-glucosamine. Asparagine 228 is a binding site for Mg(2+). The tract at residues 231–251 (QDLAALERVYQGRYAARLLAK) is linker. The N-acetyltransferase stretch occupies residues 252–458 (GVTLADPSRI…NWKRPEKVKK (207 aa)). Positions 334 and 352 each coordinate UDP-N-acetyl-alpha-D-glucosamine. Catalysis depends on histidine 364, which acts as the Proton acceptor. UDP-N-acetyl-alpha-D-glucosamine contacts are provided by tyrosine 367 and asparagine 378. Residues alanine 381, 387–388 (NY), serine 406, alanine 424, and arginine 441 contribute to the acetyl-CoA site.

It in the N-terminal section; belongs to the N-acetylglucosamine-1-phosphate uridyltransferase family. The protein in the C-terminal section; belongs to the transferase hexapeptide repeat family. Homotrimer. It depends on Mg(2+) as a cofactor.

The protein localises to the cytoplasm. It carries out the reaction alpha-D-glucosamine 1-phosphate + acetyl-CoA = N-acetyl-alpha-D-glucosamine 1-phosphate + CoA + H(+). The catalysed reaction is N-acetyl-alpha-D-glucosamine 1-phosphate + UTP + H(+) = UDP-N-acetyl-alpha-D-glucosamine + diphosphate. It participates in nucleotide-sugar biosynthesis; UDP-N-acetyl-alpha-D-glucosamine biosynthesis; N-acetyl-alpha-D-glucosamine 1-phosphate from alpha-D-glucosamine 6-phosphate (route II): step 2/2. The protein operates within nucleotide-sugar biosynthesis; UDP-N-acetyl-alpha-D-glucosamine biosynthesis; UDP-N-acetyl-alpha-D-glucosamine from N-acetyl-alpha-D-glucosamine 1-phosphate: step 1/1. Its pathway is bacterial outer membrane biogenesis; LPS lipid A biosynthesis. In terms of biological role, catalyzes the last two sequential reactions in the de novo biosynthetic pathway for UDP-N-acetylglucosamine (UDP-GlcNAc). The C-terminal domain catalyzes the transfer of acetyl group from acetyl coenzyme A to glucosamine-1-phosphate (GlcN-1-P) to produce N-acetylglucosamine-1-phosphate (GlcNAc-1-P), which is converted into UDP-GlcNAc by the transfer of uridine 5-monophosphate (from uridine 5-triphosphate), a reaction catalyzed by the N-terminal domain. The sequence is that of Bifunctional protein GlmU from Methylobacillus flagellatus (strain ATCC 51484 / DSM 6875 / VKM B-1610 / KT).